A 279-amino-acid chain; its full sequence is Thymidylate synthase (279 aa).

Position 133 to 134 (Arg-133 to Arg-134) interacts with dUMP. Catalysis depends on Cys-154, which acts as the Nucleophile. DUMP-binding positions include Arg-178–Asp-181, Asn-189, and His-219–Tyr-221. Asp-181 provides a ligand contact to (6R)-5,10-methylene-5,6,7,8-tetrahydrofolate. Ala-278 serves as a coordination point for (6R)-5,10-methylene-5,6,7,8-tetrahydrofolate.

This sequence belongs to the thymidylate synthase family. Bacterial-type ThyA subfamily. Homodimer.

It is found in the cytoplasm. It catalyses the reaction dUMP + (6R)-5,10-methylene-5,6,7,8-tetrahydrofolate = 7,8-dihydrofolate + dTMP. It participates in pyrimidine metabolism; dTTP biosynthesis. Catalyzes the reductive methylation of 2'-deoxyuridine-5'-monophosphate (dUMP) to 2'-deoxythymidine-5'-monophosphate (dTMP) while utilizing 5,10-methylenetetrahydrofolate (mTHF) as the methyl donor and reductant in the reaction, yielding dihydrofolate (DHF) as a by-product. This enzymatic reaction provides an intracellular de novo source of dTMP, an essential precursor for DNA biosynthesis. The polypeptide is Thymidylate synthase (Streptococcus mutans serotype c (strain ATCC 700610 / UA159)).